Consider the following 388-residue polypeptide: GTPase Obg (388 aa).

An Obg domain is found at 1 to 159; sequence MKFIDEASIR…RSLRLELLLL (159 aa). Residues 160-333 form the OBG-type G domain; sequence ADVGLLGMPN…LSLKLLDYIA (174 aa). GTP-binding positions include 166 to 173, 191 to 195, 213 to 216, 283 to 286, and 314 to 316; these read GMPNAGKS, FTTLV, DIPG, NKTD, and SAF. Residues Ser-173 and Thr-193 each contribute to the Mg(2+) site.

Belongs to the TRAFAC class OBG-HflX-like GTPase superfamily. OBG GTPase family. Monomer. Mg(2+) is required as a cofactor.

The protein resides in the cytoplasm. In terms of biological role, an essential GTPase which binds GTP, GDP and possibly (p)ppGpp with moderate affinity, with high nucleotide exchange rates and a fairly low GTP hydrolysis rate. Plays a role in control of the cell cycle, stress response, ribosome biogenesis and in those bacteria that undergo differentiation, in morphogenesis control. The polypeptide is GTPase Obg (Shewanella denitrificans (strain OS217 / ATCC BAA-1090 / DSM 15013)).